A 212-amino-acid chain; its full sequence is Ribosome maturation factor RimP (212 aa).

It belongs to the RimP family.

It is found in the cytoplasm. Functionally, required for maturation of 30S ribosomal subunits. The chain is Ribosome maturation factor RimP from Variovorax paradoxus (strain S110).